Consider the following 228-residue polypeptide: Ankyrin repeat domain-containing protein 46 (228 aa).

4 ANK repeats span residues 11–40 (QTNVPLLQACIDGDFTYSKRLLESGFDPNI), 44–74 (RGRTGLHLAAARGNVDICQLLHKFGADPLAT), 77–103 (QGNTALHLCGHVDTIQFLVSNGLKIDI), and 107–138 (QGATPLVLAKRRGVNKDVIRLLESLEEQEVKG). A helical transmembrane segment spans residues 195-215 (VLLLILVIALLSLGIAYYVSG).

Its subcellular location is the membrane. This is Ankyrin repeat domain-containing protein 46 (Ankrd46) from Rattus norvegicus (Rat).